A 142-amino-acid polypeptide reads, in one-letter code: Large ribosomal subunit protein uL11 (142 aa).

The protein belongs to the universal ribosomal protein uL11 family. As to quaternary structure, part of the ribosomal stalk of the 50S ribosomal subunit. Interacts with L10 and the large rRNA to form the base of the stalk. L10 forms an elongated spine to which L12 dimers bind in a sequential fashion forming a multimeric L10(L12)X complex. In terms of processing, one or more lysine residues are methylated.

In terms of biological role, forms part of the ribosomal stalk which helps the ribosome interact with GTP-bound translation factors. The sequence is that of Large ribosomal subunit protein uL11 from Pseudoalteromonas atlantica (strain T6c / ATCC BAA-1087).